The following is a 60-amino-acid chain: Arabinogalactan protein 14 (60 aa).

The N-terminal stretch at 1 to 28 (MEAMKMKLYVVVLVAVIAFSTVHQTVAA) is a signal peptide. 4-hydroxyproline is present on residues Pro-32, Pro-34, and Pro-36. 3 O-linked (Ara...) hydroxyproline glycosylation sites follow: Pro-32, Pro-34, and Pro-36. Ser-38 is lipidated: GPI-anchor amidated serine. A propeptide spans 39–60 (DASSFIPTFFASVAVMAFGFFF) (removed in mature form).

The protein belongs to the AG-peptide AGP family. In terms of processing, contains 4-hydroxyproline; hydroxylated on Pro-32, Pro-34 and Pro-36. Post-translationally, O-glycosylated on hydroxyprolines; noncontiguous hydroxylproline residues are glycosylated with arabinogalactan.

It is found in the cell membrane. Proteoglycan that seems to be implicated in diverse developmental roles such as differentiation, cell-cell recognition, embryogenesis and programmed cell death. Involved in the regulation of root hair elongation. In Arabidopsis thaliana (Mouse-ear cress), this protein is Arabinogalactan protein 14.